We begin with the raw amino-acid sequence, 437 residues long: tRNA(Ile2) 2-agmatinylcytidine synthetase TiaS (437 aa).

The protein belongs to the TiaS family.

The protein localises to the cytoplasm. It catalyses the reaction cytidine(34) in tRNA(Ile2) + agmatine + ATP + H2O = 2-agmatinylcytidine(34) in tRNA(Ile2) + AMP + 2 phosphate + 2 H(+). Its function is as follows. ATP-dependent agmatine transferase that catalyzes the formation of 2-agmatinylcytidine (agm2C) at the wobble position (C34) of tRNA(Ile2), converting the codon specificity from AUG to AUA. The sequence is that of tRNA(Ile2) 2-agmatinylcytidine synthetase TiaS from Acidilobus saccharovorans (strain DSM 16705 / JCM 18335 / VKM B-2471 / 345-15).